A 27-amino-acid chain; its full sequence is Cruzioseptin-14 (27 aa).

Expressed by the skin glands.

The protein resides in the secreted. Its function is as follows. Has antimicrobial activity. The chain is Cruzioseptin-14 from Cruziohyla calcarifer (Splendid leaf frog).